Reading from the N-terminus, the 351-residue chain is Large ribosomal subunit protein uL3 (351 aa).

Disordered regions lie at residues 1–31 (MGHR…TPRT) and 246–271 (KGSR…GQLG).

It belongs to the universal ribosomal protein uL3 family. As to quaternary structure, part of the 50S ribosomal subunit. Forms a cluster with proteins L14 and L24e.

In terms of biological role, one of the primary rRNA binding proteins, it binds directly near the 3'-end of the 23S rRNA, where it nucleates assembly of the 50S subunit. The chain is Large ribosomal subunit protein uL3 from Saccharolobus islandicus (strain M.14.25 / Kamchatka #1) (Sulfolobus islandicus).